The chain runs to 116 residues: Protein Rev (116 aa).

Phosphoserine; by host CK2 is present on residues S5 and S8. Positions 18-26 are homomultimerization; that stretch reads LIKFLYQSN. The tract at residues 25–49 is disordered; that stretch reads SNPPPSLEGTRQARRNRRRRWRERQ. The short motif at 34–50 is the Nuclear localization signal and RNA-binding (RRE) element; sequence TRQARRNRRRRWRERQR. Basic residues predominate over residues 36 to 47; it reads QARRNRRRRWRE. A Nuclear export signal and binding to XPO1 motif is present at residues 73 to 84; sequence LPLPPLEKLTLD. Phosphoserine; by host occurs at positions 92 and 99. Positions 92–116 are disordered; it reads SGTQGVGSPQILVESPAILEPGTKE.

The protein belongs to the HIV-1 REV protein family. Homomultimer; when bound to the RRE. Multimeric assembly is essential for activity and may involve XPO1. Binds to human KPNB1, XPO1, TNPO1, RANBP5 and IPO7. Interacts with the viral Integrase. Interacts with human KHDRBS1. Interacts with human NAP1; this interaction decreases Rev multimerization and stimulates its activity. Interacts with human DEAD-box helicases DDX3 and DDX24; these interactions may serve for viral RNA export to the cytoplasm and packaging, respectively. Interacts with human PSIP1; this interaction may inhibit HIV-1 DNA integration by promoting dissociation of the Integrase-LEDGF/p75 complex. Post-translationally, asymmetrically arginine dimethylated at one site by host PRMT6. Methylation impairs the RNA-binding activity and export of viral RNA from the nucleus to the cytoplasm. Phosphorylated by protein kinase CK2. Presence of, and maybe binding to the N-terminus of the regulatory beta subunit of CK2 is necessary for CK2-mediated Rev's phosphorylation.

It is found in the host nucleus. The protein resides in the host nucleolus. The protein localises to the host cytoplasm. Functionally, escorts unspliced or incompletely spliced viral pre-mRNAs (late transcripts) out of the nucleus of infected cells. These pre-mRNAs carry a recognition sequence called Rev responsive element (RRE) located in the env gene, that is not present in fully spliced viral mRNAs (early transcripts). This function is essential since most viral proteins are translated from unspliced or partially spliced pre-mRNAs which cannot exit the nucleus by the pathway used by fully processed cellular mRNAs. Rev itself is translated from a fully spliced mRNA that readily exits the nucleus. Rev's nuclear localization signal (NLS) binds directly to KPNB1/Importin beta-1 without previous binding to KPNA1/Importin alpha-1. KPNB1 binds to the GDP bound form of RAN (Ran-GDP) and targets Rev to the nucleus. In the nucleus, the conversion from Ran-GDP to Ran-GTP dissociates Rev from KPNB1 and allows Rev's binding to the RRE in viral pre-mRNAs. Rev multimerization on the RRE via cooperative assembly exposes its nuclear export signal (NES) to the surface. Rev can then form a complex with XPO1/CRM1 and Ran-GTP, leading to nuclear export of the complex. Conversion from Ran-GTP to Ran-GDP mediates dissociation of the Rev/RRE/XPO1/RAN complex, so that Rev can return to the nucleus for a subsequent round of export. Beside KPNB1, also seems to interact with TNPO1/Transportin-1, RANBP5/IPO5 and IPO7/RANBP7 for nuclear import. The nucleoporin-like HRB/RIP is an essential cofactor that probably indirectly interacts with Rev to release HIV RNAs from the perinuclear region to the cytoplasm. This is Protein Rev from Human immunodeficiency virus type 1 group M subtype B (strain 89.6) (HIV-1).